A 116-amino-acid chain; its full sequence is NADH-ubiquinone oxidoreductase chain 3 (116 aa).

Helical transmembrane passes span 8–28 (VVATALVSLILAFIAFWLPSL), 56–76 (FFLIAILFLLFDLEIALLLPL), and 88–108 (TLLWTTTILVLLTLGLIYEWF).

This sequence belongs to the complex I subunit 3 family.

The protein resides in the mitochondrion membrane. It carries out the reaction a ubiquinone + NADH + 5 H(+)(in) = a ubiquinol + NAD(+) + 4 H(+)(out). Core subunit of the mitochondrial membrane respiratory chain NADH dehydrogenase (Complex I) that is believed to belong to the minimal assembly required for catalysis. Complex I functions in the transfer of electrons from NADH to the respiratory chain. The immediate electron acceptor for the enzyme is believed to be ubiquinone. This Scyliorhinus canicula (Small-spotted catshark) protein is NADH-ubiquinone oxidoreductase chain 3 (MT-ND3).